Consider the following 423-residue polypeptide: Protein FAM43A (423 aa).

Acidic residues predominate over residues 263–283 (EQELQEEEEEEQPEGCPEEEE). Disordered regions lie at residues 263 to 298 (EQEL…EAEA), 321 to 344 (RGEA…LLLG), and 382 to 423 (LSGD…PHSG). Residues 323-335 (EALGGGGGSLGPG) are compositionally biased toward gly residues. Positions 383-393 (SGDSTGSESSI) are enriched in low complexity. Residues 401–411 (TSATAGDSSRQ) show a composition bias toward polar residues.

It belongs to the FAM43 family.

In Homo sapiens (Human), this protein is Protein FAM43A (FAM43A).